A 228-amino-acid chain; its full sequence is Sec-independent protein translocase protein TatB (228 aa).

The helical transmembrane segment at 1–21 threads the bilayer; the sequence is MFDFGLGELVFVGIIALIVLG. 2 disordered regions span residues 126–162 and 196–228; these read LSDG…AETD and VPHT…VRKS. The segment covering 206–228 has biased composition (basic residues); that stretch reads AISRKRGLRPKHRAKPKLRVRKS.

Belongs to the TatB family. In terms of assembly, the Tat system comprises two distinct complexes: a TatABC complex, containing multiple copies of TatA, TatB and TatC subunits, and a separate TatA complex, containing only TatA subunits. Substrates initially bind to the TatABC complex, which probably triggers association of the separate TatA complex to form the active translocon.

The protein localises to the cell inner membrane. Its function is as follows. Part of the twin-arginine translocation (Tat) system that transports large folded proteins containing a characteristic twin-arginine motif in their signal peptide across membranes. Together with TatC, TatB is part of a receptor directly interacting with Tat signal peptides. TatB may form an oligomeric binding site that transiently accommodates folded Tat precursor proteins before their translocation. The polypeptide is Sec-independent protein translocase protein TatB (Neisseria meningitidis serogroup C / serotype 2a (strain ATCC 700532 / DSM 15464 / FAM18)).